The chain runs to 447 residues: Na(+)-translocating NADH-quinone reductase subunit A (447 aa).

It belongs to the NqrA family. Composed of six subunits; NqrA, NqrB, NqrC, NqrD, NqrE and NqrF.

The catalysed reaction is a ubiquinone + n Na(+)(in) + NADH + H(+) = a ubiquinol + n Na(+)(out) + NAD(+). Its function is as follows. NQR complex catalyzes the reduction of ubiquinone-1 to ubiquinol by two successive reactions, coupled with the transport of Na(+) ions from the cytoplasm to the periplasm. NqrA to NqrE are probably involved in the second step, the conversion of ubisemiquinone to ubiquinol. In Neisseria gonorrhoeae (strain ATCC 700825 / FA 1090), this protein is Na(+)-translocating NADH-quinone reductase subunit A.